Here is a 191-residue protein sequence, read N- to C-terminus: uncharacterized protein (191 aa).

An N-terminal signal peptide occupies residues 1-17 (MESIILSIAIFIGVLLG). The disordered stretch occupies residues 82-148 (TFSGSRTSPD…DVGAGSGSSI (67 aa)). A helical membrane pass occupies residues 168–188 (VAVLITAAILSAPVTAIALLE).

Its subcellular location is the membrane. This is an uncharacterized protein from Saccharomyces cerevisiae (strain ATCC 204508 / S288c) (Baker's yeast).